Consider the following 207-residue polypeptide: Large ribosomal subunit protein uL3c (207 aa).

The disordered stretch occupies residues 129 to 148; that stretch reads TRGPMTHGSKNHRAPGSIGM.

This sequence belongs to the universal ribosomal protein uL3 family. In terms of assembly, part of the 50S ribosomal subunit.

It localises to the plastid. Its subcellular location is the chloroplast. Functionally, one of the primary rRNA binding proteins, it binds directly near the 3'-end of the 23S rRNA, where it nucleates assembly of the 50S subunit. This chain is Large ribosomal subunit protein uL3c (rpl3), found in Phaeodactylum tricornutum (strain CCAP 1055/1).